The chain runs to 478 residues: Stromelysin-1 (478 aa).

Positions 1–17 (MKTLPTLLLLCVALCSA) are cleaved as a signal peptide. A propeptide spans 18–100 (YPLDGASRDA…PRCGVPDVGH (83 aa)) (activation peptide). The Cysteine switch signature appears at 91 to 98 (PRCGVPDV). Cysteine 93 is a binding site for Zn(2+). Ca(2+) contacts are provided by aspartate 125 and aspartate 159. The Zn(2+) site is built by histidine 169 and aspartate 171. 4 residues coordinate Ca(2+): aspartate 176, glycine 177, glycine 179, and valine 181. Histidine 184 serves as a coordination point for Zn(2+). Residues glycine 191, asparagine 193, and aspartate 195 each coordinate Ca(2+). Histidine 197 provides a ligand contact to Zn(2+). Aspartate 199, aspartate 200, and glutamate 202 together coordinate Ca(2+). A Zn(2+)-binding site is contributed by histidine 219. Residue glutamate 220 is part of the active site. Zn(2+)-binding residues include histidine 223 and histidine 229. Hemopexin repeat units follow at residues 288 to 337 (PVMC…WPSL), 338 to 384 (PSAV…GFPS), 386 to 434 (IRKI…FPGI), and 435 to 478 (NPKI…WFQC). Cysteine 291 and cysteine 478 are disulfide-bonded. Aspartate 298 is a Ca(2+) binding site. Residues aspartate 390 and aspartate 439 each contribute to the Ca(2+) site.

It belongs to the peptidase M10A family. The cofactor is Ca(2+). Zn(2+) serves as cofactor.

It localises to the secreted. The protein resides in the extracellular space. It is found in the extracellular matrix. It carries out the reaction Preferential cleavage where P1', P2' and P3' are hydrophobic residues.. In terms of biological role, metalloproteinase with a rather broad substrate specificity that can degrade fibronectin, laminin, gelatins of type I, III, IV, and V; collagens III, IV, X, and IX, and cartilage proteoglycans. Activates different molecules including growth factors, plasminogen or other matrix metalloproteinases such as MMP9. Once released into the extracellular matrix (ECM), the inactive pro-enzyme is activated by the plasmin cascade signaling pathway. Also acts intracellularly. For example, in dopaminergic neurons, gets activated by the serine protease HTRA2 upon stress and plays a pivotal role in DA neuronal degeneration by mediating microglial activation and alpha-synuclein/SNCA cleavage. In addition, plays a role in immune response and possesses antiviral activity against various viruses. Mechanistically, translocates from the cytoplasm into the cell nucleus upon virus infection to influence NF-kappa-B activities. In Oryctolagus cuniculus (Rabbit), this protein is Stromelysin-1 (MMP3).